Consider the following 802-residue polypeptide: Phenylalanine--tRNA ligase beta subunit (802 aa).

In terms of domain architecture, tRNA-binding spans 40–155 (SASLKNVVVG…AHVETGVNAI (116 aa)). In terms of domain architecture, B5 spans 409-484 (KAVNKIETSL…RIYGYDEIPV (76 aa)). Positions 462, 468, 471, and 472 each coordinate Mg(2+). An FDX-ACB domain is found at 709–802 (PRYPEMTRDL…LQEKLNAIIR (94 aa)).

The protein belongs to the phenylalanyl-tRNA synthetase beta subunit family. Type 1 subfamily. As to quaternary structure, tetramer of two alpha and two beta subunits. It depends on Mg(2+) as a cofactor.

The protein resides in the cytoplasm. It carries out the reaction tRNA(Phe) + L-phenylalanine + ATP = L-phenylalanyl-tRNA(Phe) + AMP + diphosphate + H(+). The chain is Phenylalanine--tRNA ligase beta subunit from Listeria monocytogenes serovar 1/2a (strain ATCC BAA-679 / EGD-e).